Here is a 542-residue protein sequence, read N- to C-terminus: Thermosome subunit (542 aa).

Belongs to the TCP-1 chaperonin family. As to quaternary structure, forms an oligomeric complex of eight-membered rings.

Molecular chaperone; binds unfolded polypeptides in vitro, and has a weak ATPase activity. In Methanocaldococcus jannaschii (strain ATCC 43067 / DSM 2661 / JAL-1 / JCM 10045 / NBRC 100440) (Methanococcus jannaschii), this protein is Thermosome subunit (ths).